The primary structure comprises 507 residues: Ribosomal protein uS12 methylthiotransferase RimO (507 aa).

The 112-residue stretch at 13-124 (RRVALLTLGC…ISDRLGAVLA (112 aa)) folds into the MTTase N-terminal domain. Positions 22, 58, and 87 each coordinate [4Fe-4S] cluster. Residues 150-175 (AAVSLPGHGTRAAAAGPGGRSAPVEV) form a disordered region. A compositionally biased stretch (low complexity) spans 155–172 (PGHGTRAAAAGPGGRSAP). One can recognise a Radical SAM core domain in the interval 191 to 422 (LDTGPVASLK…ALADELCAQR (232 aa)). 3 residues coordinate [4Fe-4S] cluster: C205, C209, and C212. The region spanning 424 to 497 (EQRLGSTVQV…GVDLVAVPDG (74 aa)) is the TRAM domain.

This sequence belongs to the methylthiotransferase family. RimO subfamily. Requires [4Fe-4S] cluster as cofactor.

It is found in the cytoplasm. It carries out the reaction L-aspartate(89)-[ribosomal protein uS12]-hydrogen + (sulfur carrier)-SH + AH2 + 2 S-adenosyl-L-methionine = 3-methylsulfanyl-L-aspartate(89)-[ribosomal protein uS12]-hydrogen + (sulfur carrier)-H + 5'-deoxyadenosine + L-methionine + A + S-adenosyl-L-homocysteine + 2 H(+). Functionally, catalyzes the methylthiolation of an aspartic acid residue of ribosomal protein uS12. This is Ribosomal protein uS12 methylthiotransferase RimO from Salinispora arenicola (strain CNS-205).